A 503-amino-acid polypeptide reads, in one-letter code: Splicing factor 3A subunit 3 (503 aa).

Disordered regions lie at residues 296–317 (PALMAKKPSAKTASAQSREHER) and 341–384 (ATKE…NPKN). Over residues 358 to 377 (DDSDVEASESDNEDDPDADD) the composition is skewed to acidic residues. 3 positions are modified to phosphoserine: Ser-360, Ser-365, and Ser-367. The Matrin-type zinc-finger motif lies at 408-439 (YNCEICGNFTYKGPKAFQRHFAEWRHAHGMRC).

This sequence belongs to the SF3A3 family. In terms of assembly, probable component of a the U2 small nuclear ribonucleoproteins complex (U2 snRNP). In terms of tissue distribution, ubiquitous. In ovaries and testes, it is expressed in all germ and somatic cells. Highly expressed in spermatogonias and spermatocytes. Highly expressed in the germ cells of larval testes, while it is weakly expressed in fat body cells, in polyploid nuclei of salivary glands, and in larval brain.

Its subcellular location is the nucleus. Its function is as follows. Probable subunit of a splicing factor complex required for 'A' complex assembly formed by the stable binding of U2 snRNP to the branchpoint sequence (BPS) in pre-mRNA. Involved in male fertility. This is Splicing factor 3A subunit 3 (noi) from Drosophila melanogaster (Fruit fly).